The following is a 167-amino-acid chain: uncharacterized protein (167 aa).

Over residues 1-13 (MQGDIRRKKDLLP) the composition is skewed to basic and acidic residues. Disordered regions lie at residues 1–26 (MQGD…SRRR) and 67–167 (ESHS…ILDN). The span at 71 to 80 (SDVSASASDH) shows a compositional bias: low complexity. Positions 102-156 (VPKEKFNNEVAKQQEVKNLENDLKPQIDSEKQKQINKDKKEQKQQLQKEKQDLAK) are enriched in basic and acidic residues.

This is an uncharacterized protein from Saccharomyces cerevisiae (strain ATCC 204508 / S288c) (Baker's yeast).